Here is a 272-residue protein sequence, read N- to C-terminus: Shikimate dehydrogenase (NADP(+)) (272 aa).

Shikimate is bound by residues 14 to 16 (SKS) and threonine 61. Lysine 65 functions as the Proton acceptor in the catalytic mechanism. Glutamate 77 serves as a coordination point for NADP(+). Shikimate is bound by residues asparagine 86 and aspartate 102. NADP(+) contacts are provided by residues 126–130 (GAGGA), 149–154 (NRTADK), and methionine 212. Tyrosine 214 is a shikimate binding site. An NADP(+)-binding site is contributed by glycine 237.

The protein belongs to the shikimate dehydrogenase family. Homodimer.

It catalyses the reaction shikimate + NADP(+) = 3-dehydroshikimate + NADPH + H(+). Its pathway is metabolic intermediate biosynthesis; chorismate biosynthesis; chorismate from D-erythrose 4-phosphate and phosphoenolpyruvate: step 4/7. Functionally, involved in the biosynthesis of the chorismate, which leads to the biosynthesis of aromatic amino acids. Catalyzes the reversible NADPH linked reduction of 3-dehydroshikimate (DHSA) to yield shikimate (SA). The protein is Shikimate dehydrogenase (NADP(+)) of Glaesserella parasuis serovar 5 (strain SH0165) (Haemophilus parasuis).